The primary structure comprises 270 residues: Orotidine 5'-phosphate decarboxylase (270 aa).

Lysine 89 functions as the Proton donor in the catalytic mechanism.

It belongs to the OMP decarboxylase family. Type 2 subfamily.

It catalyses the reaction orotidine 5'-phosphate + H(+) = UMP + CO2. It participates in pyrimidine metabolism; UMP biosynthesis via de novo pathway; UMP from orotate: step 2/2. The protein is Orotidine 5'-phosphate decarboxylase of Dehalococcoides mccartyi (strain CBDB1).